The sequence spans 596 residues: Elongation factor 4 (596 aa).

Positions 2 to 183 constitute a tr-type G domain; the sequence is ENIRNFSIIA…AIIKRIPAPK (182 aa). GTP-binding positions include 14–19 and 130–133; these read DHGKST and NKID.

Belongs to the TRAFAC class translation factor GTPase superfamily. Classic translation factor GTPase family. LepA subfamily.

The protein localises to the cell inner membrane. It catalyses the reaction GTP + H2O = GDP + phosphate + H(+). Functionally, required for accurate and efficient protein synthesis under certain stress conditions. May act as a fidelity factor of the translation reaction, by catalyzing a one-codon backward translocation of tRNAs on improperly translocated ribosomes. Back-translocation proceeds from a post-translocation (POST) complex to a pre-translocation (PRE) complex, thus giving elongation factor G a second chance to translocate the tRNAs correctly. Binds to ribosomes in a GTP-dependent manner. The chain is Elongation factor 4 from Campylobacter hominis (strain ATCC BAA-381 / DSM 21671 / CCUG 45161 / LMG 19568 / NCTC 13146 / CH001A).